The chain runs to 443 residues: Transcriptional regulatory protein ZraR (443 aa).

A Response regulatory domain is found at D7–L121. D56 carries the 4-aspartylphosphate modification. A Sigma-54 factor interaction domain is found at M141–V370. Residues G172, T173, R329, and R359 each contribute to the ATP site. The H-T-H motif DNA-binding region spans K423–S442.

Post-translationally, phosphorylated by ZraS.

Its subcellular location is the cytoplasm. Activity of the ZraS/ZraR two-component system is repressed by the zinc-bound form of ZraP, which probably interacts with the periplasmic region of ZraS. In terms of biological role, part of the Zra signaling pathway, an envelope stress response (ESR) system composed of the periplasmic accessory protein ZraP, the histidine kinase ZraS and the transcriptional regulator ZraR. The ZraPSR system contributes to antibiotic resistance and is important for membrane integrity in the presence of membrane-targeting biocides. ZraR is a member of the two-component regulatory system ZraS/ZraR. When activated by ZraS, acts in conjunction with sigma-54 to regulate the expression of zraP in the presence of high Zn(2+) or Pb(2+) concentrations. Also positively autoregulates the expression of the zraSR operon. This Klebsiella oxytoca protein is Transcriptional regulatory protein ZraR (zraR).